Here is a 938-residue protein sequence, read N- to C-terminus: Respiratory burst oxidase homolog protein C (938 aa).

The tract at residues 1–63 (MQNSENHHPH…DIGTSAGAGA (63 aa)) is disordered. The Cytoplasmic segment spans residues 1–369 (MQNSENHHPH…MYFLLDNWQR (369 aa)). Residues 115 to 141 (ASLVRNASSRIRQVSQELKRLASLNKR) are a coiled coil. 2 EF-hand-like regions span residues 185-195 (TAPTTGLLPRA) and 222-233 (RNITTDSINKAQ). EF-hand domains follow at residues 245–280 (SFDT…SASA) and 289–324 (QSDE…APNQ). The Ca(2+) site is built by aspartate 258, aspartate 260, aspartate 262, arginine 264, and glutamate 269. Residues 370–390 (VWVLLLWIGIMAVLFTWKYIQ) traverse the membrane as a helical segment. The Extracellular portion of the chain corresponds to 391-402 (YKQKAAYDVMGP). The chain crosses the membrane as a helical span at residues 403 to 423 (CVCLAKGAAETIKLNMAIILL). The Ferric oxidoreductase domain maps to 408 to 565 (KGAAETIKLN…LFIIVYTLLI (158 aa)). The Cytoplasmic segment spans residues 424–454 (PVCRNTITWLRNKTRLGSAVPFDDNLNFHKV). Residues 455–475 (IAVAIALGVAIHGLAHLTCDF) traverse the membrane as a helical segment. Residues 476–509 (PKLLNASEEAYEPMIYYFGEQPESYWWFVRGVEG) lie on the Extracellular side of the membrane. Residues 510 to 530 (VTGIIMVVLMAIAFTLATPWF) form a helical membrane-spanning segment. Residues 531–545 (RRGRVSFPKPFHKLT) are Cytoplasmic-facing. The chain crosses the membrane as a helical span at residues 546–566 (GFNAFWYSHHLFIIVYTLLIV). Over 567–580 (HGEKLYITKDWYKR) the chain is Extracellular. Residues 581-599 (STWMYLTVPLVLYAGERLL) traverse the membrane as a helical segment. The FAD-binding FR-type domain maps to 599–727 (LRAFRSSIKA…DGPYGAPAQD (129 aa)). Topologically, residues 600–732 (RAFRSSIKAV…APAQDYKQYE (133 aa)) are cytoplasmic. Residues 733 to 753 (VVLLVGLGIGATPMISIVKDI) form a helical membrane-spanning segment. Over 754–938 (VNNMKAMDEE…TKFDFHKENF (185 aa)) the chain is Extracellular. The interval 762–796 (EEENSLENGNGMSNAAQNASPNMAQKRGKSSSASG) is disordered. Residues 767–784 (LENGNGMSNAAQNASPNM) show a composition bias toward polar residues.

It belongs to the RBOH (TC 5.B.1.3) family. Monomer and homodimer. Phosphorylated by CPK. Expressed in leaves.

Its subcellular location is the membrane. Functionally, calcium-dependent NADPH oxidase that generates superoxide. May be responsible for the oxidative burst in response to pathogen attack in the leaves. The chain is Respiratory burst oxidase homolog protein C (RBOHC) from Solanum tuberosum (Potato).